The primary structure comprises 203 residues: Akirin-2 (203 aa).

Phosphoserine is present on residues S18 and S21. The Nuclear localization signal signature appears at P22–C27. The residue at position 57 (S57) is a Phosphoserine. The SYVS motif motif lies at S200 to S203.

It belongs to the akirin family. As to quaternary structure, homodimer. Interacts with IPO9; the interaction is direct. Associates with 20S and 26S proteasomes. Interacts with SMARCD1; promoting SWI/SNF complex recruitment. Interacts with NFKBIZ. Interacts with YWHAB. Post-translationally, polyubiquitinated. Polyubiquitination is dependent of UBR5 that extends pre-ubiquitinated AKIRIN2. In terms of tissue distribution, widely expressed. Most abundant in the lung, followed by the skeletal muscle, heart, liver, fat, thymus, lymph node, small intestine, kidney and spleen. In skeletal muscle, expressed at higher level in fast extensor digitorum longus (EDL) and longissimus lumborum (LL) muscles than in slow soleus (SOL) muscles.

Its subcellular location is the nucleus. The protein localises to the cytoplasm. It is found in the membrane. Functionally, molecular adapter that acts as a bridge between a variety of multiprotein complexes, and which is involved in embryonic development, immunity, myogenesis and brain development. Plays a key role in nuclear protein degradation by promoting import of proteasomes into the nucleus: directly binds to fully assembled 20S proteasomes at one end and to nuclear import receptor IPO9 at the other end, bridging them together and mediating the import of pre-assembled proteasome complexes through the nuclear pore. Involved in innate immunity by regulating the production of interleukin-6 (IL6) downstream of Toll-like receptor (TLR): acts by bridging the NF-kappa-B inhibitor NFKBIZ and the SWI/SNF complex, leading to promote induction of IL6. Also involved in adaptive immunity by promoting B-cell activation. Involved in brain development: required for the survival and proliferation of cerebral cortical progenitor cells. Involved in myogenesis: required for skeletal muscle formation and skeletal development, possibly by regulating expression of muscle differentiation factors. This chain is Akirin-2, found in Sus scrofa (Pig).